The following is a 346-amino-acid chain: Biotin synthase (346 aa).

One can recognise a Radical SAM core domain in the interval 38 to 256 (QQVQVSTLLS…IAVARIMMPT (219 aa)). Residues Cys-53, Cys-57, and Cys-60 each coordinate [4Fe-4S] cluster. Positions 97, 128, 188, and 260 each coordinate [2Fe-2S] cluster.

Belongs to the radical SAM superfamily. Biotin synthase family. As to quaternary structure, homodimer. Requires [4Fe-4S] cluster as cofactor. [2Fe-2S] cluster is required as a cofactor.

It carries out the reaction (4R,5S)-dethiobiotin + (sulfur carrier)-SH + 2 reduced [2Fe-2S]-[ferredoxin] + 2 S-adenosyl-L-methionine = (sulfur carrier)-H + biotin + 2 5'-deoxyadenosine + 2 L-methionine + 2 oxidized [2Fe-2S]-[ferredoxin]. It participates in cofactor biosynthesis; biotin biosynthesis; biotin from 7,8-diaminononanoate: step 2/2. In terms of biological role, catalyzes the conversion of dethiobiotin (DTB) to biotin by the insertion of a sulfur atom into dethiobiotin via a radical-based mechanism. This is Biotin synthase from Salmonella agona (strain SL483).